The chain runs to 256 residues: tRNA (guanine-N(7)-)-methyltransferase (256 aa).

The interval 17-45 (TCETVPGLPQKKHYRQRAHSNPHSDHDIE) is disordered. The segment covering 26 to 36 (QKKHYRQRAHS) has biased composition (basic residues). S-adenosyl-L-methionine contacts are provided by residues glycine 74, 97 to 98 (EI), 132 to 133 (NA), and leucine 152. The active site involves aspartate 155. 230–232 (TEE) is an S-adenosyl-L-methionine binding site.

It belongs to the class I-like SAM-binding methyltransferase superfamily. TrmB family.

It localises to the nucleus. The catalysed reaction is guanosine(46) in tRNA + S-adenosyl-L-methionine = N(7)-methylguanosine(46) in tRNA + S-adenosyl-L-homocysteine. Its pathway is tRNA modification; N(7)-methylguanine-tRNA biosynthesis. Functionally, catalyzes the formation of N(7)-methylguanine at position 46 (m7G46) in tRNA. The polypeptide is tRNA (guanine-N(7)-)-methyltransferase (Caenorhabditis elegans).